The sequence spans 307 residues: Protoheme IX farnesyltransferase (307 aa).

9 helical membrane-spanning segments follow: residues 31–51 (VMSLVIFTCFVGMLLAPYSVH), 52–72 (PFIASIAVVCIAFGAGSAGAI), 102–119 (ALSFGLITGFFAVFFMAL), 123–145 (LLASFLLLFTIFYYICIYTIWLK), 151–171 (NIVIGGVSGALPPVIGYAAVS), 179–199 (VILFLIILIWTPPHSWALALF), 225–245 (ILIYSFLLFIVSLMPFFIGMS), 247–267 (FIYLIISGILGLVFLYYAGSL), and 281–301 (FVYSIFYLFFIFLLLYLTNTI).

The protein belongs to the UbiA prenyltransferase family. Protoheme IX farnesyltransferase subfamily.

Its subcellular location is the cell inner membrane. It carries out the reaction heme b + (2E,6E)-farnesyl diphosphate + H2O = Fe(II)-heme o + diphosphate. It functions in the pathway porphyrin-containing compound metabolism; heme O biosynthesis; heme O from protoheme: step 1/1. Converts heme B (protoheme IX) to heme O by substitution of the vinyl group on carbon 2 of heme B porphyrin ring with a hydroxyethyl farnesyl side group. This chain is Protoheme IX farnesyltransferase, found in Rickettsia canadensis (strain McKiel).